The sequence spans 388 residues: Alanine racemase (388 aa).

The active-site Proton acceptor; specific for D-alanine is the lysine 44. Lysine 44 bears the N6-(pyridoxal phosphate)lysine mark. Residue arginine 142 participates in substrate binding. Tyrosine 273 (proton acceptor; specific for L-alanine) is an active-site residue. Substrate is bound at residue methionine 321.

This sequence belongs to the alanine racemase family. Pyridoxal 5'-phosphate is required as a cofactor.

The enzyme catalyses L-alanine = D-alanine. It participates in amino-acid biosynthesis; D-alanine biosynthesis; D-alanine from L-alanine: step 1/1. Its function is as follows. Catalyzes the interconversion of L-alanine and D-alanine. May also act on other amino acids. The protein is Alanine racemase (alr) of Mycobacterium avium (strain 104).